Reading from the N-terminus, the 475-residue chain is MAQHDFVPAWLNFSTPQSAKSSTATFDKHGEHLSRGEGRFGISRRRHNSSDGFFNNGPLRTTGDSWHQPSLFRHDSVDSGVSKGAYAGTTGNLSGWHGSSRGHDGMSQRAGGSTGNHRHWNGSFHSRKGCAFQEKTPTEIREEKKEDKVEKLQFEEEDFPSLNPEAGKQNQPCRPIGTPSGVWENPPSAKQPSKMLVIKKISKEDPAAAFSAAFTSGSHHANGNKVSTMVPSVYKNLVPKPAPPPSKPNAWKANRMEHKPGSLSSSREAALTNPVSVTKPVVLAAGVVLNAPKESPSSTTPPIEISSSRLTKLTRRTTDRKSEFLKTLKDERNEDCSQSRDCDKLEGLRLEGSHTPEPKENGEQGCLQNGLSLPMVEEREVLSHSLEAEHRLLKAMGWQEYPENDESCLPLTEDELKEFHTRTEQLRRNGFVKNGFLQGRSSSLFSPWRSTCIAECEDSDTETSSSETSDDDAWK.

Phosphoserine occurs at positions 49 and 76. Disordered regions lie at residues 92-115 (NLSGWHGSSRGHDGMSQRAGGSTG) and 160-191 (PSLNPEAGKQNQPCRPIGTPSGVWENPPSAKQ). At Ser-202 the chain carries Phosphoserine. 2 disordered regions span residues 237–271 (LVPKPAPPPSKPNAWKANRMEHKPGSLSSSREAAL) and 292–318 (PKESPSSTTPPIEISSSRLTKLTRRTT). Residues 294–311 (ESPSSTTPPIEISSSRLT) show a composition bias toward low complexity. Thr-300 carries the phosphothreonine modification. Ser-383 is modified (phosphoserine). A disordered region spans residues 456–475 (CEDSDTETSSSETSDDDAWK).

This sequence belongs to the vasculin family.

Its subcellular location is the nucleus. Possible transcription factor. The chain is Vasculin-like protein 1 (Gpbp1l1) from Rattus norvegicus (Rat).